The sequence spans 214 residues: uncharacterized protein (214 aa).

A run of 4 helical transmembrane segments spans residues 43 to 63, 84 to 104, 116 to 136, and 150 to 170; these read IQKPNVIIMYISVLVLFAAHI, IEWAKSNFFRICGALVFIPVI, ALVIFVFLMGFPQRSIMEYFI, and PVTRIFIIGAAVFSCVMFGIF.

The protein resides in the host membrane. This is an uncharacterized protein from Citrus leprosis virus C (isolate Citrus sinesis/Brazil/Cordeiropolis/2003) (CiLV-C).